The primary structure comprises 155 residues: uncharacterized protein (155 aa).

One can recognise an N-acetyltransferase domain in the interval 6 to 155; sequence LRIELGEETN…RDMVRLYLDL (150 aa). Residues 69–71, 77–82, and 111–117 each bind CoA; these read IAV, KKGFGK, and QLSLYQK.

In terms of biological role, probable N-acetyltransferase. This is an uncharacterized protein from Bacillus subtilis (strain 168).